We begin with the raw amino-acid sequence, 535 residues long: MFLSRVNPTRFPPFVASRRLFSASASAASLQQYCTEKPPIKPWPQRLFPKRLVSMITQQQNIDLALQIFLYAGKSHPGFTHNYDTYHSILFKLSRARAFDPVESLMADLRNSYPPIKCGENLFIDLLRNYGLAGRYESSMRIFLRIPDFGVKRSVRSLNTLLNVLIQNQRFDLVHAMFKNSKESFGITPNIFTCNLLVKALCKKNDIESAYKVLDEIPSMGLVPNLVTYTTILGGYVARGDMESAKRVLEEMLDRGWYPDATTYTVLMDGYCKLGRFSEAATVMDDMEKNEIEPNEVTYGVMIRALCKEKKSGEARNMFDEMLERSFMPDSSLCCKVIDALCEDHKVDEACGLWRKMLKNNCMPDNALLSTLIHWLCKEGRVTEARKLFDEFEKGSIPSLLTYNTLIAGMCEKGELTEAGRLWDDMYERKCKPNAFTYNVLIEGLSKNGNVKEGVRVLEEMLEIGCFPNKTTFLILFEGLQKLGKEEDAMKIVSMAVMNGKVDKESWELFLKKFAGELDKGVLPLKELLHEISVS.

The transit peptide at 1–28 (MFLSRVNPTRFPPFVASRRLFSASASAA) directs the protein to the mitochondrion. PPR repeat units lie at residues 82–112 (NYDTYHSILFKLSRARAFDPVESLMADLRNS), 119–153 (GENLFIDLLRNYGLAGRYESSMRIFLRIPDFGVKR), 154–189 (SVRSLNTLLNVLIQNQRFDLVHAMFKNSKESFGITP), 190–224 (NIFTCNLLVKALCKKNDIESAYKVLDEIPSMGLVP), 225–259 (NLVTYTTILGGYVARGDMESAKRVLEEMLDRGWYP), 260–294 (DATTYTVLMDGYCKLGRFSEAATVMDDMEKNEIEP), 295–329 (NEVTYGVMIRALCKEKKSGEARNMFDEMLERSFMP), 330–364 (DSSLCCKVIDALCEDHKVDEACGLWRKMLKNNCMP), 365–395 (DNALLSTLIHWLCKEGRVTEARKLFDEFEKG), 399–433 (SLLTYNTLIAGMCEKGELTEAGRLWDDMYERKCKP), 434–468 (NAFTYNVLIEGLSKNGNVKEGVRVLEEMLEIGCFP), and 469–503 (NKTTFLILFEGLQKLGKEEDAMKIVSMAVMNGKVD).

It belongs to the PPR family. P subfamily.

It is found in the mitochondrion. The protein is Pentatricopeptide repeat-containing protein At5g16420, mitochondrial of Arabidopsis thaliana (Mouse-ear cress).